Here is a 292-residue protein sequence, read N- to C-terminus: Transcription factor HFR1 (292 aa).

Residues 114–153 (KRRIQVLSSDDESEEFTREVPSVTRKGSKRRRRDEKMSNK) are disordered. A basic motif; degenerate region spans residues 134-147 (PSVTRKGSKRRRRD). The bHLH domain occupies 134 to 183 (PSVTRKGSKRRRRDEKMSNKMRKLQQLVPNCHKTDKVSVLDKTIEYMKNL). Positions 139–153 (KGSKRRRRDEKMSNK) are enriched in basic residues. A Nuclear localization signal motif is present at residues 141 to 148 (SKRRRRDE). Positions 148-183 (EKMSNKMRKLQQLVPNCHKTDKVSVLDKTIEYMKNL) are helix-loop-helix motif.

In terms of assembly, binds to FHY1 and FHL. Forms PHYA/FHY1/HFR1 complex. Homodimer and heterodimer with PIF3. Do not interact alone with either phytochrome A (phyA) or B (phyB), but REP1/PIF3 complex binds to phyA and phyB, preferentially to the Pfr forms. Forms non-functional heterodimer with PRE6, causing liberation of PIF4 from the transcriptionally inactive complex HFR1-PIF4. Repressed when bound to PRE1, PRE2 and PRE4. In terms of tissue distribution, mainly expressed in fruits and flowers and, to a lower extent, in leaves, stems, seedlings and roots.

It is found in the nucleus. Atypical bHLH transcription factor that regulates photomorphogenesis through modulation of phytochrome (e.g. PHYA) and cryptochrome signalings. Suppresses the transcriptional regulation activity of PIF4 by forming non-DNA-binding heterodimer. This is Transcription factor HFR1 from Arabidopsis thaliana (Mouse-ear cress).